A 501-amino-acid polypeptide reads, in one-letter code: Protein disulfide isomerase-like 1-1 (501 aa).

Positions methionine 1–serine 23 are cleaved as a signal peptide. The 118-residue stretch at glutamate 24–glycine 141 folds into the Thioredoxin 1 domain. Asparagine 39 is a glycosylation site (N-linked (GlcNAc...) asparagine). Residues cysteine 59 and cysteine 62 each act as nucleophile in the active site. Cysteines 59 and 62 form a disulfide. An N-linked (GlcNAc...) asparagine glycan is attached at asparagine 275. The Thioredoxin 2 domain occupies phenylalanine 354–aspartate 482. Catalysis depends on nucleophile residues cysteine 404 and cysteine 407. Residues cysteine 404 and cysteine 407 are joined by a disulfide bond. The Prevents secretion from ER signature appears at lysine 498–leucine 501.

This sequence belongs to the protein disulfide isomerase family. In terms of assembly, interacts with RD21A, At3g19390, At5g43060. Highly expressed in flowers, stems and immature seeds, and at lower levels in leaves and siliques (at protein level).

The protein resides in the endoplasmic reticulum lumen. It localises to the vacuole. The catalysed reaction is Catalyzes the rearrangement of -S-S- bonds in proteins.. In terms of biological role, protein disulfide isomerase that associates with RD21A protease for trafficking from the ER through the Golgi to lytic and protein storage vacuoles of endothelial cells in developing seeds. Regulates the timing of programmed cell death (PCD) of the endothelial cells by chaperoning and inhibiting cysteine proteases during their trafficking to vacuoles. The chain is Protein disulfide isomerase-like 1-1 (PDIL1-1) from Arabidopsis thaliana (Mouse-ear cress).